A 466-amino-acid chain; its full sequence is 23S rRNA (uracil(1939)-C(5))-methyltransferase RlmD (466 aa).

The 54-residue stretch at 1-54 folds into the TRAM domain; that stretch reads MVDVLNIESLDLEARGIAHRDGKVLFVEGALPGERVTVQTVRRKPSYEIAKVEE. Residues C67, C73, C76, and C155 each contribute to the [4Fe-4S] cluster site. Positions 264, 293, 298, 314, 342, and 363 each coordinate S-adenosyl-L-methionine. The active-site Nucleophile is the C393.

The protein belongs to the class I-like SAM-binding methyltransferase superfamily. RNA M5U methyltransferase family. RlmD subfamily.

The catalysed reaction is uridine(1939) in 23S rRNA + S-adenosyl-L-methionine = 5-methyluridine(1939) in 23S rRNA + S-adenosyl-L-homocysteine + H(+). In terms of biological role, catalyzes the formation of 5-methyl-uridine at position 1939 (m5U1939) in 23S rRNA. The protein is 23S rRNA (uracil(1939)-C(5))-methyltransferase RlmD of Bordetella parapertussis (strain 12822 / ATCC BAA-587 / NCTC 13253).